Here is a 399-residue protein sequence, read N- to C-terminus: Insertion element IS116 uncharacterized 44.8 kDa protein (399 aa).

It belongs to the transposase IS1111A/IS1328/IS1533 family.

This chain is Insertion element IS116 uncharacterized 44.8 kDa protein, found in Streptomyces clavuligerus.